Consider the following 356-residue polypeptide: MQTLHALLRDIPAPDAEAMARAQQHIDGLLKPPGSLGRLETLAVQLAGMPGLNGTPQVGEKAVLVMCADHGVWDEGVAVSPKIVTAIQAANMTRGTTGVCVLAAQAGAKVHVIDVGIDAEPIPGVVNMRVARGCGNIAVGPAMSRLQAEALLLEVSRYTCDLAQRGVTLFGVGELGMANTTPAAAMVSVFTGSDAKEVVGIGANLPPSRIDNKVDVVRRAIAINQPNPRDGIDVLSKVGGFDLVGMTGVMLGAARCGLPVLLDGFLSYSAALAACQIAPAVRPYLIPSHFSAEKGARIALAHLSMEPYLHMAMRLGEGSGAALAMPIVEAACAMFHNMGELAASNIVLPEGNANAT.

Glutamate 317 serves as the catalytic Proton acceptor.

This sequence belongs to the CobT family. In terms of assembly, homodimer.

The enzyme catalyses 5,6-dimethylbenzimidazole + nicotinate beta-D-ribonucleotide = alpha-ribazole 5'-phosphate + nicotinate + H(+). It participates in nucleoside biosynthesis; alpha-ribazole biosynthesis; alpha-ribazole from 5,6-dimethylbenzimidazole: step 1/2. In terms of biological role, catalyzes the synthesis of alpha-ribazole-5'-phosphate from nicotinate mononucleotide (NAMN) and 5,6-dimethylbenzimidazole (DMB). The polypeptide is Nicotinate-nucleotide--dimethylbenzimidazole phosphoribosyltransferase (Salmonella dublin (strain CT_02021853)).